Consider the following 496-residue polypeptide: T-cell activation inhibitor, mitochondrial (496 aa).

Residues 404-437 (KAQQARENMKRKEELKVIENELIQASTKKFSLEK) are a coiled coil.

The protein resides in the mitochondrion. Its function is as follows. May regulate T-cell apoptosis. This Homo sapiens (Human) protein is T-cell activation inhibitor, mitochondrial (TCAIM).